A 177-amino-acid polypeptide reads, in one-letter code: Platelet glycoprotein IX (177 aa).

An N-terminal signal peptide occupies residues 1 to 16 (MPAWGALFLLWATAEA). Positions 17 to 51 (TKDCPSPCTCRALETMGLWVDCRGHGLTALPALPA) constitute an LRRNT domain. Topologically, residues 17-147 (TKDCPSPCTC…QLQASWVRPG (131 aa)) are extracellular. The N-linked (GlcNAc...) asparagine glycan is linked to asparagine 60. The LRR repeat unit spans residues 60–83 (NNSLQSVPPGAFDHLPQLQTLDVT). The LRRCT domain maps to 85–137 (NPWHCDCSLTYLRLWLEDRTPEALLQVRCASPSLAAHGPLGRLTGYQLGSCGW). The helical transmembrane segment at 148–168 (VLWDVALVAVAALGLALLAGL) threads the bilayer. Residues 169–177 (LCATTEALD) lie on the Cytoplasmic side of the membrane.

In terms of assembly, two GP-Ib beta are disulfide-linked to one GP-Ib alpha. GP-IX is complexed with the GP-Ib heterodimer via a non covalent linkage.

It is found in the membrane. Its function is as follows. The GPIb-V-IX complex functions as the vWF receptor and mediates vWF-dependent platelet adhesion to blood vessels. The adhesion of platelets to injured vascular surfaces in the arterial circulation is a critical initiating event in hemostasis. GP-IX may provide for membrane insertion and orientation of GP-Ib. The protein is Platelet glycoprotein IX (GP9) of Homo sapiens (Human).